The sequence spans 350 residues: Probable galactose-1-phosphate uridylyltransferase (350 aa).

The disordered stretch occupies residues 31–52 (PWSGQQEKAQKNELPEFDPTNP). Zn(2+) is bound at residue cysteine 54. Residues 76 to 77 (ND) and asparagine 152 each bind UDP-alpha-D-glucose. Histidine 163 contributes to the Zn(2+) binding site. Histidine 165 acts as the Tele-UMP-histidine intermediate in catalysis. Residues glutamine 167, 314–317 (KFMV), and 319–320 (FE) each bind UDP-alpha-D-glucose.

The protein belongs to the galactose-1-phosphate uridylyltransferase type 1 family. As to quaternary structure, homodimer. It depends on Zn(2+) as a cofactor.

The enzyme catalyses alpha-D-galactose 1-phosphate + UDP-alpha-D-glucose = alpha-D-glucose 1-phosphate + UDP-alpha-D-galactose. Its pathway is carbohydrate metabolism; galactose metabolism. This chain is Probable galactose-1-phosphate uridylyltransferase (Galt), found in Drosophila melanogaster (Fruit fly).